We begin with the raw amino-acid sequence, 309 residues long: Porphobilinogen deaminase (309 aa).

Cysteine 242 carries the post-translational modification S-(dipyrrolylmethanemethyl)cysteine.

It belongs to the HMBS family. Monomer. Requires dipyrromethane as cofactor.

It catalyses the reaction 4 porphobilinogen + H2O = hydroxymethylbilane + 4 NH4(+). It participates in porphyrin-containing compound metabolism; protoporphyrin-IX biosynthesis; coproporphyrinogen-III from 5-aminolevulinate: step 2/4. In terms of biological role, tetrapolymerization of the monopyrrole PBG into the hydroxymethylbilane pre-uroporphyrinogen in several discrete steps. The polypeptide is Porphobilinogen deaminase (Shewanella sediminis (strain HAW-EB3)).